Reading from the N-terminus, the 400-residue chain is Opsin-3 (400 aa).

The Extracellular segment spans residues 1-38; sequence MYSGNRSGDQGYWEDGAGAEGAAPAGTRSPAPLFSPTA. N5 is a glycosylation site (N-linked (GlcNAc...) asparagine). A helical membrane pass occupies residues 39–63; that stretch reads YERLALLLGCLALLGVGGNLLVLLL. At 64-75 the chain is on the cytoplasmic side; the sequence is YSKFPRLRTPTH. Residues 76–100 traverse the membrane as a helical segment; it reads LFLVNLSLGDLLVSLFGVTFTFASC. At 101–115 the chain is on the extracellular side; that stretch reads LRNGWVWDAVGCAWD. C112 and C186 form a disulfide bridge. The chain crosses the membrane as a helical span at residues 116 to 135; that stretch reads GFSGSLFGFVSITTLTVLAY. The Cytoplasmic portion of the chain corresponds to 136 to 151; the sequence is ERYIRVVHARVINFSW. Residues 152-175 traverse the membrane as a helical segment; that stretch reads AWRAITYIWLYSLAWAGAPLLGWN. The Extracellular segment spans residues 176-199; the sequence is RYILDIHGLGCTVDWRSKDANDSS. The N-linked (GlcNAc...) asparagine glycan is linked to N196. The helical transmembrane segment at 200 to 227 threads the bilayer; the sequence is FVLFLFLGCLVVPVGIIAHCYGHILYSV. The Cytoplasmic segment spans residues 228–253; that stretch reads RMLRCVEDLQTIQVIKMLRYEKKVAK. The chain crosses the membrane as a helical span at residues 254-277; the sequence is MCFLMAFVFLTCWMPYIVTRFLVV. The Extracellular segment spans residues 278–285; it reads NGYGHLVT. The chain crosses the membrane as a helical span at residues 286-310; sequence PTVSIVSYLFAKSSTVYNPVIYIFM. The residue at position 297 (K297) is an N6-(retinylidene)lysine. The Cytoplasmic segment spans residues 311 to 400; sequence NRKFRRSLLQ…KVDVIQVRPL (90 aa). The S-palmitoyl cysteine moiety is linked to residue C323.

The protein belongs to the G-protein coupled receptor 1 family. Opsin subfamily. In terms of assembly, interacts with MC1R; the interaction results in a decrease in MC1R-mediated cAMP signaling and ultimately a decrease in melanin production in melanocytes. Expressed in the eye (at protein level). Expressed in tracheal airway smooth muscle. Expressed in brown adipocyte tissue; expression becomes more abundant during differentiation. Strongly expressed in brain. Highly expressed in the preoptic area and paraventricular nucleus of the hypothalamus. Shows highly patterned expression in other regions of the brain, being enriched in selected regions of the cerebral cortex, cerebellar Purkinje cells, a subset of striatal neurons, selected thalamic nuclei, and a subset of interneurons in the ventral horn of the spinal cord.

The protein resides in the cell membrane. Its subcellular location is the cytoplasm. Its function is as follows. G-protein coupled receptor which selectively activates G proteins via ultraviolet A (UVA) light-mediated activation in the skin. Binds both 11-cis retinal and all-trans retinal. Regulates melanogenesis in melanocytes via inhibition of alpha-MSH-induced MC1R-mediated cAMP signaling, modulation of calcium flux, regulation of CAMK2 phosphorylation, and subsequently phosphorylation of CREB, p38, ERK and MITF in response to blue light. Plays a role in melanocyte survival through regulation of intracellular calcium levels and subsequent BCL2/RAF1 signaling. Additionally regulates apoptosis via cytochrome c release and subsequent activation of the caspase cascade. Required for TYR and DCT blue light-induced complex formation in melanocytes. Involved in keratinocyte differentiation in response to blue-light. Required for the UVA-mediated induction of calcium and mitogen-activated protein kinase signaling resulting in the expression of MMP1, MMP2, MMP3, MMP9 and TIMP1 in dermal fibroblasts. Plays a role in light-mediated glucose uptake, mitochondrial respiration and fatty acid metabolism in brown adipocyte tissues. May be involved in photorelaxation of airway smooth muscle cells, via blue-light dependent GPCR signaling pathways. The chain is Opsin-3 (Opn3) from Mus musculus (Mouse).